Here is a 276-residue protein sequence, read N- to C-terminus: Secreted RxLR effector protein 85 (276 aa).

A signal peptide spans 1-27 (MRYCAFRLGLFFIGYSCCVLLSTPTLA). Positions 110 to 113 (RQLR) match the RxLR motif.

The protein belongs to the RxLR effector family.

The protein resides in the secreted. It is found in the host cell membrane. Functionally, secreted effector that partially suppresses the host cell death induced by cell death-inducing proteins. The protein is Secreted RxLR effector protein 85 of Plasmopara viticola (Downy mildew of grapevine).